The sequence spans 108 residues: uncharacterized protein (108 aa).

The helical transmembrane segment at 10-32 (LQAPYILCTSFITLKIHNFFFFF) threads the bilayer.

The protein resides in the membrane. This is an uncharacterized protein from Saccharomyces cerevisiae (strain ATCC 204508 / S288c) (Baker's yeast).